The primary structure comprises 422 residues: UPF0761 membrane protein XAC0937 (422 aa).

6 helical membrane passes run 45–65, 102–122, 151–171, 179–199, 213–233, and 247–267; these read VFALVPLAIVVFGVLSAFPAF, FTVAGMVALVASLLITLHSIE, GTMLAAASMAMAAYVFALPLF, LAEFAWRLAPMAVEFVCIVLI, ALPGALLAVILMEIVKWGFGF, and ALSALPILLLWIYLSWVSVLL.

This sequence belongs to the UPF0761 family.

It localises to the cell inner membrane. The sequence is that of UPF0761 membrane protein XAC0937 from Xanthomonas axonopodis pv. citri (strain 306).